The following is an 847-amino-acid chain: Vacuolar membrane protease (847 aa).

Residues 1-17 (MQFGKSLLKHVYTRTFK) are Cytoplasmic-facing. Residues 18–38 (SSLTCSIFAFTLLMIFFVLDW) form a helical membrane-spanning segment. Residues 39 to 348 (KRMNVYPRLD…GSYWQINLNL (310 aa)) are Vacuolar-facing. Residues H146 and D158 each coordinate Zn(2+). E190 (proton acceptor) is an active-site residue. Residue E191 coordinates Zn(2+). Residue N208 is glycosylated (N-linked (GlcNAc...) asparagine). Zn(2+) is bound at residue E216. A glycan (N-linked (GlcNAc...) asparagine) is linked at N274. Residue H291 coordinates Zn(2+). A helical transmembrane segment spans residues 349-369 (HLFLNVVFLIACPAILFMCLF). At 370–381 (RFPSLYAQLKKP) the chain is on the cytoplasmic side. A helical transmembrane segment spans residues 382–402 (CYLICFTLSSLFVLIFDYVVV). Residues 403-415 (QSLTKLNPYVIHS) are Vacuolar-facing. A helical transmembrane segment spans residues 416-436 (SPDAVLAFFFLTNLLGLVYSF). The Cytoplasmic portion of the chain corresponds to 437–454 (RYVATHSRMSNEELSCIE). The helical transmembrane segment at 455–475 (IVLIWYVSMFWYISLLIATLT) threads the bilayer. Residues 476 to 482 (SIVRGLG) lie on the Vacuolar side of the membrane. Residues 483–503 (SLYFVNFGFFCSFFCCILTLI) traverse the membrane as a helical segment. Residues 504-560 (RVRYFVDRMVTINRPANPEQMPLVQSTSGNAYGTSRYPQHRLKAVVSKSASVKLNDN) lie on the Cytoplasmic side of the membrane. Residues 561–581 (LWSVLFFSCLVPLPLFTCYNL) traverse the membrane as a helical segment. Residues 582–605 (LSEVFIPAVHQSLIDGPYSNTCYK) lie on the Vacuolar side of the membrane. The chain crosses the membrane as a helical span at residues 606–626 (FAVILVFMAIINSSPFVFRAL). Topologically, residues 627–630 (SKKS) are cytoplasmic. Residues 631 to 651 (SAILLMLWVSLLFNILRAEPF) traverse the membrane as a helical segment. The Vacuolar portion of the chain corresponds to 652 to 847 (NEKAPIKFRV…LLKMSKTHVM (196 aa)). 4 N-linked (GlcNAc...) asparagine glycosylation sites follow: N726, N734, N800, and N834.

The protein belongs to the peptidase M28 family. Zn(2+) serves as cofactor.

It is found in the vacuole membrane. May be involved in vacuolar sorting and osmoregulation. The sequence is that of Vacuolar membrane protease from Schizosaccharomyces japonicus (strain yFS275 / FY16936) (Fission yeast).